We begin with the raw amino-acid sequence, 274 residues long: 2-dehydro-3-deoxyphosphooctonate aldolase (274 aa).

The protein belongs to the KdsA family.

It is found in the cytoplasm. It carries out the reaction D-arabinose 5-phosphate + phosphoenolpyruvate + H2O = 3-deoxy-alpha-D-manno-2-octulosonate-8-phosphate + phosphate. It participates in carbohydrate biosynthesis; 3-deoxy-D-manno-octulosonate biosynthesis; 3-deoxy-D-manno-octulosonate from D-ribulose 5-phosphate: step 2/3. It functions in the pathway bacterial outer membrane biogenesis; lipopolysaccharide biosynthesis. The protein is 2-dehydro-3-deoxyphosphooctonate aldolase of Rickettsia peacockii (strain Rustic).